The sequence spans 67 residues: Non-specific lipid-transfer protein 2P (67 aa).

4 cysteine pairs are disulfide-bonded: C2/C34, C10/C24, C25/C60, and C36/C67.

Its function is as follows. Transfer lipids across membranes. May play a role in plant defense or in the biosynthesis of cuticle layers. In Triticum aestivum (Wheat), this protein is Non-specific lipid-transfer protein 2P.